Here is a 258-residue protein sequence, read N- to C-terminus: 6-phosphogluconolactonase (258 aa).

The residue at position 2 (alanine 2) is an N-acetylalanine. Phosphoserine is present on serine 49. Lysine 180 carries the N6-acetyllysine modification.

Belongs to the glucosamine/galactosamine-6-phosphate isomerase family. 6-phosphogluconolactonase subfamily.

The protein resides in the cytoplasm. It catalyses the reaction 6-phospho-D-glucono-1,5-lactone + H2O = 6-phospho-D-gluconate + H(+). Its pathway is carbohydrate degradation; pentose phosphate pathway; D-ribulose 5-phosphate from D-glucose 6-phosphate (oxidative stage): step 2/3. Hydrolysis of 6-phosphogluconolactone to 6-phosphogluconate. The chain is 6-phosphogluconolactonase (PGLS) from Bos taurus (Bovine).